The primary structure comprises 271 residues: Probable diacyglycerol O-acyltransferase tgs3 (271 aa).

It belongs to the long-chain O-acyltransferase family.

It catalyses the reaction an acyl-CoA + a 1,2-diacyl-sn-glycerol = a triacyl-sn-glycerol + CoA. Its pathway is glycerolipid metabolism; triacylglycerol biosynthesis. In terms of biological role, catalyzes the terminal and only committed step in triacylglycerol synthesis by using diacylglycerol and fatty acyl CoA as substrates. Required for storage lipid synthesis. This Mycobacterium tuberculosis (strain CDC 1551 / Oshkosh) protein is Probable diacyglycerol O-acyltransferase tgs3 (tgs3).